Consider the following 62-residue polypeptide: Large ribosomal subunit protein eL24 (62 aa).

Zn(2+) contacts are provided by Cys7, Cys10, Cys33, and Cys37. Residues 7–37 (CDYCGDDIEPGTGTMFVHNDGSTVHFCSAKC) form a C4-type zinc finger.

The protein belongs to the eukaryotic ribosomal protein eL24 family. As to quaternary structure, part of the 50S ribosomal subunit. Forms a cluster with proteins L3 and L14. The cofactor is Zn(2+).

Binds to the 23S rRNA. This Halobacterium salinarum (strain ATCC 29341 / DSM 671 / R1) protein is Large ribosomal subunit protein eL24.